We begin with the raw amino-acid sequence, 1826 residues long: 1,3-beta-glucan synthase component bgs3 (1826 aa).

Residues 34 to 43 (QSNDQYNNIQ) are compositionally biased toward polar residues. Residues 34–90 (QSNDQYNNIQHPAPSFANPFIHEQDDSYSDILEEEPDEDAYDSPERPSSTEEFISQD) are disordered. Over residues 59-75 (DSYSDILEEEPDEDAYD) the composition is skewed to acidic residues. The next 7 helical transmembrane spans lie at 427 to 447 (IWIL…PTIY), 465 to 485 (WCAP…ALIL), 504 to 524 (LIFV…IFGF), 543 to 563 (FFFS…FLLG), 597 to 617 (AALW…FLTL), 637 to 657 (FMIG…LVYL), and 660 to 680 (LVLF…MFSI). Phosphoserine is present on S885. A run of 11 helical transmembrane segments spans residues 1272–1292 (VFIM…GAMY), 1329–1349 (IISI…HDLL), 1375–1397 (VTQN…YIAT), 1417–1437 (GSSI…TMTV), 1438–1458 (WTTH…CPFI), 1531–1551 (IFTE…AYTF), 1571–1591 (IWIM…ILLM), 1607–1627 (YGAV…VFTF), 1642–1662 (VLGC…VVVF), 1701–1721 (CKVV…CILF), and 1770–1790 (SLLF…PLVL).

This sequence belongs to the glycosyltransferase 48 family. As to quaternary structure, component of the 1,3-beta-glucan synthase (GS) complex, composed of at least the alternate catalytic subunits bgs1, bgs2, bgs3, and bgs4, and a regulatory subunit chr4.

The protein resides in the membrane. It catalyses the reaction [(1-&gt;3)-beta-D-glucosyl](n) + UDP-alpha-D-glucose = [(1-&gt;3)-beta-D-glucosyl](n+1) + UDP + H(+). Alternate catalytic subunit of the 1,3-beta-glucan synthase (GS) complex. Synthesizes 1,3-beta-glucan, a major structural component of the yeast cell wall. Required for cell wall biosynthesis and cell elongation. This Schizosaccharomyces pombe (strain 972 / ATCC 24843) (Fission yeast) protein is 1,3-beta-glucan synthase component bgs3.